The sequence spans 712 residues: Amine oxidase [copper-containing] gamma 1 (712 aa).

Positions 1 to 24 are cleaved as a signal peptide; it reads MAEPSFARLFLLFFSFLLIFATYS. N-linked (GlcNAc...) asparagine glycans are attached at residues Asn146 and Asn173. Residues Cys188 and Cys210 are joined by a disulfide bond. 352–363 contacts substrate; the sequence is YMDAGELGLGPT. Asp354 (proton acceptor) is an active-site residue. Residues Cys373 and Cys399 are joined by a disulfide bond. 439–444 contacts substrate; it reads VGNYDY. The Schiff-base intermediate with substrate; via topaquinone role is filled by Tyr442. Position 442 is a 2',4',5'-topaquinone (Tyr442). Residues His499 and His501 each contribute to the Cu cation site. 3 residues coordinate Mn(2+): Asp508, Met509, and Asp510. N-linked (GlcNAc...) asparagine glycans are attached at residues Asn516 and Asn617. Positions 651 and 652 each coordinate Mn(2+). His662 lines the Cu cation pocket.

This sequence belongs to the copper/topaquinone oxidase family. In terms of assembly, homodimer. It depends on Cu cation as a cofactor. Zn(2+) serves as cofactor. Requires L-topaquinone as cofactor. Mn(2+) is required as a cofactor. In terms of processing, topaquinone (TPQ) is generated by copper-dependent autoxidation of a specific tyrosyl residue. Mostly expressed in roots, stems and flowers, and, at lower levels, in leaves and cotyledons.

It is found in the secreted. The protein localises to the extracellular space. It localises to the apoplast. The enzyme catalyses a primary methyl amine + O2 + H2O = an aldehyde + H2O2 + NH4(+). It participates in amine and polyamine degradation; putrescine degradation. Its function is as follows. Copper amine oxidase that can use putrescine and spermidine as substrates. Required for abscisic acid- (ABA) and polyamine- (PA) and H(2)O(2)-dependent induced nitric oxide (NO) biosynthesis. Involved in ABA signal transduction and in responses to osmotic stress. This chain is Amine oxidase [copper-containing] gamma 1, found in Arabidopsis thaliana (Mouse-ear cress).